A 356-amino-acid chain; its full sequence is Peptide chain release factor 1 (356 aa).

Gln-234 carries the N5-methylglutamine modification.

The protein belongs to the prokaryotic/mitochondrial release factor family. Methylated by PrmC. Methylation increases the termination efficiency of RF1.

The protein resides in the cytoplasm. In terms of biological role, peptide chain release factor 1 directs the termination of translation in response to the peptide chain termination codons UAG and UAA. This Parafrankia sp. (strain EAN1pec) protein is Peptide chain release factor 1.